Consider the following 621-residue polypeptide: Very-long-chain aldehyde decarbonylase GL1-5 (621 aa).

5 helical membrane-spanning segments follow: residues 99–119 (IILSGILLYLGALYVPGGQHL), 126–146 (GAGLIALLHAGPVEFLYYWFH), 186–206 (LLFSIPLIACALTGTASIIAF), 224–244 (FELVPSWLFTWFPPLKYLMYT), and 332–352 (MWPLSWLSMVLTWTYGSSFTV). The Fatty acid hydroxylase domain occupies 138–272 (VEFLYYWFHR…MPFYDYIYNT (135 aa)).

Belongs to the sterol desaturase family. In terms of assembly, homodimer.

It localises to the endoplasmic reticulum membrane. It catalyses the reaction a long-chain fatty aldehyde + 2 NADPH + O2 + H(+) = a long-chain alkane + formate + 2 NADP(+) + H2O. In terms of biological role, aldehyde decarbonylase involved in the conversion of aldehydes to alkanes. Core component of a very-long-chain alkane synthesis complex. This is Very-long-chain aldehyde decarbonylase GL1-5 from Oryza sativa subsp. indica (Rice).